Consider the following 148-residue polypeptide: Deoxyuridine 5'-triphosphate nucleotidohydrolase (148 aa).

Residues 67–69 (RSG), Asn-80, 84–86 (LID), and Met-94 contribute to the substrate site.

Belongs to the dUTPase family. Mg(2+) serves as cofactor.

It catalyses the reaction dUTP + H2O = dUMP + diphosphate + H(+). It participates in pyrimidine metabolism; dUMP biosynthesis; dUMP from dCTP (dUTP route): step 2/2. Functionally, this enzyme is involved in nucleotide metabolism: it produces dUMP, the immediate precursor of thymidine nucleotides and it decreases the intracellular concentration of dUTP so that uracil cannot be incorporated into DNA. This chain is Deoxyuridine 5'-triphosphate nucleotidohydrolase, found in Ralstonia pickettii (strain 12J).